Here is a 465-residue protein sequence, read N- to C-terminus: Iron transporter FTH1 (465 aa).

Topologically, residues 1 to 11 (MAFEDYFSFQI) are vacuolar. The chain crosses the membrane as a helical span at residues 12 to 32 (FFIFLRESLEIVVIVSILLTI). Topologically, residues 33–135 (VKQGLSVEDD…LYQKLKIQIL (103 aa)) are cytoplasmic. Residues 44–66 (PFEGSSSSAGLPSPNTNTNADST) form a disordered region. Residues 46 to 66 (EGSSSSAGLPSPNTNTNADST) are compositionally biased toward polar residues. Residues 136–156 (AGGAFGLLLCMLIGGAFVSIF) form a helical membrane-spanning segment. The Vacuolar segment spans residues 157 to 170 (YHIGTDLWTLSEHY). Residues 171–191 (YEGVLSLVASVIISVMGLFFL) form a helical membrane-spanning segment. At 192-289 (RMGKLREKFR…FFFRYSSSLS (98 aa)) the chain is on the cytoplasmic side. A helical membrane pass occupies residues 290–310 (LKICLVVATCFLYLIAAGLFS). Topologically, residues 311-358 (KGVWQLELQDYVNKCNGQDMSEVGNGPGSYDISRSVWHVNCCNGEKDG) are vacuolar. The chain crosses the membrane as a helical span at residues 359 to 379 (GWMIFTAIFGWTNSATVGSVI). At 380 to 465 (SYNAYWLVLI…LIIDSSGSAN (86 aa)) the chain is on the cytoplasmic side. The tract at residues 433–465 (TSELNSSTSEPDSQRRSKDSSVPLIIDSSGSAN) is disordered. Residues serine 449 and serine 453 each carry the phosphoserine modification.

This sequence belongs to the oxidase-dependent Fe transporter (OFeT) (TC 9.A.10.1) family. In terms of assembly, interacts with FET5.

The protein resides in the vacuole membrane. Functionally, high affinity iron transporter probably involved in transport of intravacuolar stores of iron. The chain is Iron transporter FTH1 (FTH1) from Saccharomyces cerevisiae (strain ATCC 204508 / S288c) (Baker's yeast).